The primary structure comprises 96 residues: Large ribosomal subunit protein uL23cz (96 aa).

The protein belongs to the universal ribosomal protein uL23 family. In terms of assembly, part of the 50S ribosomal subunit.

It localises to the plastid. The protein localises to the chloroplast. Binds to 23S rRNA. The sequence is that of Large ribosomal subunit protein uL23cz (rpl23-A) from Sorghum bicolor (Sorghum).